The following is a 239-amino-acid chain: Protein GUCD1 (239 aa).

This Mus musculus (Mouse) protein is Protein GUCD1 (Gucd1).